The following is a 340-amino-acid chain: MDFKKKPIKKKSITVAYFYEHLSSRLSIKLKKLNQVDEEKRKIYERDIHRPGLALAGFTNLFTYRRVQVFGNTETWFLNHLGTEERKQAFSNITRYKVPCIIVTNNNKLDPELVEMATEAGIPLYRTSHTTTKFIYLITDFLDDQFCHYQHYHGSMVDVYGVGMFITGRSGIGKSEVALDLIERGHRLVADDLVVITRKGESVLMASGTELVRHFMEIRGLGIIDVEAMFGIRAIRHQKRVEIVVELLEFEPGKEFDRTGLENKSVDILGVEVPLVQLPIYPGKNITVIAEVVALNYLLKHYGYDAAEEFDRRIQQQIATRATVNNPAQRAVEYFEHDFE.

Active-site residues include His-153 and Lys-174. Residue 168-175 (GRSGIGKS) coordinates ATP. Position 175 (Ser-175) interacts with Mg(2+). The active-site Proton acceptor; for phosphorylation activity. Proton donor; for dephosphorylation activity is the Asp-192. The tract at residues 216–225 (MEIRGLGIID) is important for the catalytic mechanism of both phosphorylation and dephosphorylation. Position 217 (Glu-217) interacts with Mg(2+). Residue Arg-258 is part of the active site. An important for the catalytic mechanism of dephosphorylation region spans residues 279 to 284 (PIYPGK).

Belongs to the HPrK/P family. As to quaternary structure, homohexamer. It depends on Mg(2+) as a cofactor.

It catalyses the reaction [HPr protein]-L-serine + ATP = [HPr protein]-O-phospho-L-serine + ADP + H(+). The enzyme catalyses [HPr protein]-O-phospho-L-serine + phosphate + H(+) = [HPr protein]-L-serine + diphosphate. Catalyzes the ATP- as well as the pyrophosphate-dependent phosphorylation of a specific serine residue in HPr, a phosphocarrier protein of the phosphoenolpyruvate-dependent sugar phosphotransferase system (PTS). HprK/P also catalyzes the pyrophosphate-producing, inorganic phosphate-dependent dephosphorylation (phosphorolysis) of seryl-phosphorylated HPr (P-Ser-HPr). The chain is HPr kinase/phosphorylase from Chloroherpeton thalassium (strain ATCC 35110 / GB-78).